The following is a 202-amino-acid chain: Adenylate kinase (202 aa).

12–20 (GVPGVGKTT) serves as a coordination point for ATP.

It belongs to the archaeal adenylate kinase family.

It localises to the cytoplasm. It carries out the reaction AMP + ATP = 2 ADP. This is Adenylate kinase (adkA) from Aeropyrum pernix (strain ATCC 700893 / DSM 11879 / JCM 9820 / NBRC 100138 / K1).